Here is a 409-residue protein sequence, read N- to C-terminus: MLEFLFISLLWLFKPIYFLLFTVMFSFLIFNNFSWGGLFLVLDSYSFILLIVMSLFILGIIVISEKNNNLLILSEILVFICIIFFIPSNMMMLYMFFELSMFPILVMILGYGSQIEKINSSYYLMFYAAFCSFPFLFVYFKSNFLLVFTYYNFVISWEMFFILSLSFMMKFPIYFLHLWLPKAHVEAPTTASMLLAGLLLKLGTAGFLRILGSLSFVHNNVWILIAFLGMILGSFCCVFQSDSKALAAYSSVTHMSFLLLSLVFITMSSKISSVMLMLAHGYTSTLMFYLIGEFYHTSGSRMIYFMSSFFSSSMIMGILFSVVFLSNSGVPPSLSFLSEFLVISNSMLISKSMFVMIFIYFVVSFYYSLFLITSSLMGKGYHNFNTWNVGFSAPLVLMMYNVFWLSVFY.

A run of 13 helical transmembrane segments spans residues 10 to 30 (LWLF…FLIF), 44 to 64 (SYSF…IVIS), 76 to 96 (ILVF…LYMF), 98 to 118 (ELSM…IEKI), 120 to 140 (SSYY…FVYF), 160 to 180 (FFIL…HLWL), 194 to 214 (LLAG…LGSL), 221 to 241 (VWIL…VFQS), 245 to 265 (ALAA…LVFI), 271 to 291 (ISSV…FYLI), 305 to 325 (FMSS…VVFL), 353 to 373 (MFVM…FLIT), and 389 to 409 (VGFS…SVFY).

The protein belongs to the complex I subunit 4 family.

The protein resides in the mitochondrion membrane. It catalyses the reaction a ubiquinone + NADH + 5 H(+)(in) = a ubiquinol + NAD(+) + 4 H(+)(out). In terms of biological role, core subunit of the mitochondrial membrane respiratory chain NADH dehydrogenase (Complex I) that is believed to belong to the minimal assembly required for catalysis. Complex I functions in the transfer of electrons from NADH to the respiratory chain. The immediate electron acceptor for the enzyme is believed to be ubiquinone. The polypeptide is NADH-ubiquinone oxidoreductase chain 4 (Caenorhabditis elegans).